The sequence spans 1023 residues: Sodium/potassium-transporting ATPase subunit alpha-1 (1023 aa).

Residues 1–5 (MGKGV) constitute a propeptide that is removed on maturation. Over residues 1–11 (MGKGVGRDKYE) the composition is skewed to basic and acidic residues. A disordered region spans residues 1–38 (MGKGVGRDKYEPAAVSEHGDKKSKKAKKERDMDELKKE). Topologically, residues 6–87 (GRDKYEPAAV…NALTPPPTTP (82 aa)) are cytoplasmic. Lys9 is modified (N6-acetyllysine). At Tyr10 the chain carries Phosphotyrosine. Phosphoserine; by PKC is present on Ser16. Lys21 carries the post-translational modification N6-acetyllysine. Ser23 carries the phosphoserine; by PKC modification. Positions 28–38 (KERDMDELKKE) are enriched in basic and acidic residues. A phosphoserine mark is found at Ser40 and Ser47. The phosphoinositide-3 kinase binding stretch occupies residues 82 to 84 (PPP). A helical membrane pass occupies residues 88–108 (EWVKFCRQLFGGFSMLLWIGA). The Extracellular segment spans residues 109–131 (ILCFLAYGIRSATEEEPPNDDLY). The helical transmembrane segment at 132–152 (LGVVLSAVVIITGCFSYYQEA) threads the bilayer. Topologically, residues 153 to 288 (KSSKIMESFK…GGQTPIAEEI (136 aa)) are cytoplasmic. Positions 216 to 235 (SSLTGESEPQTRSPDFTNEN) are disordered. Ser228 carries the post-translational modification Phosphoserine. Residue Tyr260 is modified to Phosphotyrosine. The chain crosses the membrane as a helical span at residues 289–308 (EHFIHLITGVAVFLGVSFFI). At 309–320 (LSLILEYTWLEA) the chain is on the extracellular side. Residues 321 to 338 (VIFLIGIIVANVPEGLLA) traverse the membrane as a helical segment. Residues 339-772 (TVTVCLTLTA…EEGRLIFDNL (434 aa)) are Cytoplasmic-facing. The 4-aspartylphosphate intermediate role is filled by Asp376. A phosphoserine mark is found at Ser452 and Ser484. ATP is bound at residue Lys487. Tyr542 is subject to Phosphotyrosine. Residues 596–717 (RAAVPDAVGK…QGAIVAVTGD (122 aa)) form a mediates interaction with SCN7A region. The residue at position 661 (Lys661) is an N6-succinyllysine. Phosphoserine is present on residues Ser668 and Ser675. Mg(2+) contacts are provided by Asp717 and Asp721. Residues 773–792 (KKSIAYTLTSNIPEITPFLI) traverse the membrane as a helical segment. The Extracellular segment spans residues 793 to 802 (FIIANIPLPL). A helical transmembrane segment spans residues 803–823 (GTVTILCIDLGTDMVPAISLA). Over 824 to 843 (YEQAESDIMKRQPRNPKTDK) the chain is Cytoplasmic. The chain crosses the membrane as a helical span at residues 844 to 866 (LVNERLISMAYGQIGMIQALGGF). Residues 867 to 918 (FTYFVILAENGFLPFHLLGIRETWDDRWINDVEDSYGQQWTYEQRKIVEFTC) lie on the Extracellular side of the membrane. Residues 919–938 (HTAFFVSIVVVQWADLVICK) traverse the membrane as a helical segment. The Cytoplasmic portion of the chain corresponds to 939–951 (TRRNSVFQQGMKN). A Phosphoserine; by PKA modification is found at Ser943. A helical membrane pass occupies residues 952–970 (KILIFGLFEETALAAFLSY). Residues 971–985 (CPGMGAALRMYPLKP) are Extracellular-facing. The helical transmembrane segment at 986–1006 (TWWFCAFPYSLLIFVYDEVRK) threads the bilayer. At 1007 to 1023 (LIIRRRPGGWVEKETYY) the chain is on the cytoplasmic side.

Belongs to the cation transport ATPase (P-type) (TC 3.A.3) family. Type IIC subfamily. The sodium/potassium-transporting ATPase is composed of a catalytic alpha subunit, an auxiliary non-catalytic beta subunit and an additional regulatory subunit. Interacts with regulatory subunit FXYD1. Interacts with regulatory subunit FXYD3. Interacts with SLC35G1 and STIM1. Interacts with SIK1. Interacts with CLN3; this interaction regulates the sodium/potassium-transporting ATPase complex localization at the plasma membrane. Interacts with SCN7A; activates ATP1A1 P-type sodium:potassium-exchanging transporter activity which indirectly signals to nearby neurons to regulate sodium homeostasis. In terms of processing, phosphorylation on Tyr-10 modulates pumping activity. Phosphorylation of Ser-943 by PKA modulates the response of ATP1A1 to PKC. Dephosphorylation by protein phosphatase 2A (PP2A) following increases in intracellular sodium, leading to increase catalytic activity. Expressed in the central nervous system, in most motor and sensory axons of the ventral and dorsal roots, as well as in the large motor neurons of the ventral horn (at protein level).

The protein localises to the cell membrane. It localises to the basolateral cell membrane. The protein resides in the sarcolemma. Its subcellular location is the cell projection. It is found in the axon. The protein localises to the melanosome. The catalysed reaction is K(+)(out) + Na(+)(in) + ATP + H2O = K(+)(in) + Na(+)(out) + ADP + phosphate + H(+). Its function is as follows. This is the catalytic component of the active enzyme, which catalyzes the hydrolysis of ATP coupled with the exchange of sodium and potassium ions across the plasma membrane. This action creates the electrochemical gradient of sodium and potassium ions, providing the energy for active transport of various nutrients. Could also be part of an osmosensory signaling pathway that senses body-fluid sodium levels and controls salt intake behavior as well as voluntary water intake to regulate sodium homeostasis. The sequence is that of Sodium/potassium-transporting ATPase subunit alpha-1 (Atp1a1) from Rattus norvegicus (Rat).